The chain runs to 338 residues: Fructose-1,6-bisphosphatase class 1 1 (338 aa).

4 residues coordinate Mg(2+): E94, D116, L118, and D119. Substrate is bound by residues 119–122 (DGSS), N210, and K276. Residue E282 participates in Mg(2+) binding.

Belongs to the FBPase class 1 family. In terms of assembly, homotetramer. Requires Mg(2+) as cofactor.

It is found in the cytoplasm. The catalysed reaction is beta-D-fructose 1,6-bisphosphate + H2O = beta-D-fructose 6-phosphate + phosphate. It participates in carbohydrate biosynthesis; gluconeogenesis. This is Fructose-1,6-bisphosphatase class 1 1 from Paraburkholderia xenovorans (strain LB400).